Consider the following 473-residue polypeptide: MSQLLTPRQAEELHKSIIAYFLSAKLPKSAAALREEIADSVQLDDSTAKKYEGLLEKKWTSVVRLQKKIMDLEARNSALQSELDSATPTSLSRRNQDPVSWLPRAPARHRLESHRNPVTSVAFHPVFSSLASGSEDTTIKIWDWELGELERTIKGHTRAVVDVDYGGPHGGTLLASCSSDLTIKLWDPSDEYKNIRTLPGHDHSVSAVRFIPSGAAGSPLSGNLLVSASRDKTLRIWDVTTGYCVRTLHGHVEWVRDVVPSPDGRFLFSAGDDRVARLWDVSSGETKSTFLGHEHFIECVALAPPTTYPYLAALAGLKKPPPPSSSAEYVATGSRDKTIRVWDSRGTLIKTLIGHDNWVRALVFHPGGKYLLSVSDDKTIRCWDLSQEFKCVRVVTDAHAFVTCIRWAPNIIKDAGGMGVNGDINGGGSLALSGVNGIIPGSKKEDPGGGAKLGIRCVIATGSVDLNVRVFAS.

Positions 9 to 41 (QAEELHKSIIAYFLSAKLPKSAAALREEIADSV) constitute a LisH domain. Positions 60–87 (TSVVRLQKKIMDLEARNSALQSELDSAT) form a coiled coil. The span at 80-93 (QSELDSATPTSLSR) shows a compositional bias: polar residues. The disordered stretch occupies residues 80 to 99 (QSELDSATPTSLSRRNQDPV). WD repeat units follow at residues 113-154 (SHRN…RTIK), 156-196 (HTRA…KNIR), 200-247 (GHDH…CVRT), 250-289 (GHVE…TKST), 292-352 (GHEH…IKTL), 354-393 (GHDN…KCVR), 397-434 (DAHA…ALSG), and 435-472 (VNGI…RVFA).

The protein belongs to the WD repeat LIS1/nudF family. Self-associates. Interacts with NDL1 and dynein.

The protein localises to the cytoplasm. Its subcellular location is the cytoskeleton. It is found in the spindle pole. In terms of biological role, positively regulates the activity of the minus-end directed microtubule motor protein dynein. May enhance dynein-mediated microtubule sliding by targeting dynein to the microtubule plus end. Required for nuclear migration during vegetative growth as well as development. Required for retrograde early endosome (EE) transport from the hyphal tip. Required for localization of dynein to the mitotic spindle poles. Recruits additional proteins to the dynein complex at SPBs. This Ajellomyces dermatitidis (strain ER-3 / ATCC MYA-2586) (Blastomyces dermatitidis) protein is Nuclear distribution protein PAC1.